A 454-amino-acid polypeptide reads, in one-letter code: Photosystem II CP47 reaction center protein (454 aa).

The next 6 membrane-spanning stretches (helical) occupy residues 6–26 (MFVL…GWTI), 47–61 (IILS…IWHW), 86–102 (GIHL…FGAF), 149–164 (IAAG…FHLS), 183–198 (VLSS…AFVV), and 403–418 (SFAL…HGAR).

This sequence belongs to the PsbB/PsbC family. PsbB subfamily. As to quaternary structure, PSII is composed of 1 copy each of membrane proteins PsbA, PsbB, PsbC, PsbD, PsbE, PsbF, PsbH, PsbI, PsbJ, PsbK, PsbL, PsbM, PsbT, PsbX, PsbY, PsbZ, Psb30/Ycf12, at least 3 peripheral proteins of the oxygen-evolving complex and a large number of cofactors. It forms dimeric complexes. Binds multiple chlorophylls. PSII binds additional chlorophylls, carotenoids and specific lipids. serves as cofactor.

The protein localises to the plastid. It localises to the chloroplast thylakoid membrane. Its function is as follows. One of the components of the core complex of photosystem II (PSII). It binds chlorophyll and helps catalyze the primary light-induced photochemical processes of PSII. PSII is a light-driven water:plastoquinone oxidoreductase, using light energy to abstract electrons from H(2)O, generating O(2) and a proton gradient subsequently used for ATP formation. This Ostreococcus tauri protein is Photosystem II CP47 reaction center protein.